Consider the following 178-residue polypeptide: Ribosome maturation factor RimM (178 aa).

One can recognise a PRC barrel domain in the interval 100–178; it reads DEGEFYWHQL…EIRVDWDADF (79 aa).

This sequence belongs to the RimM family. As to quaternary structure, binds ribosomal protein uS19.

Its subcellular location is the cytoplasm. In terms of biological role, an accessory protein needed during the final step in the assembly of 30S ribosomal subunit, possibly for assembly of the head region. Essential for efficient processing of 16S rRNA. May be needed both before and after RbfA during the maturation of 16S rRNA. It has affinity for free ribosomal 30S subunits but not for 70S ribosomes. This Azotobacter vinelandii (strain DJ / ATCC BAA-1303) protein is Ribosome maturation factor RimM.